A 110-amino-acid chain; its full sequence is Light-harvesting complex-like protein OHP1, chloroplastic (110 aa).

The N-terminal 41 residues, 1–41 (MSSSPLSSSLFHPLSTLSTHCHGRRQNLCFNRKQQPFVVRA), are a transit peptide targeting the chloroplast. At 42-74 (AKLPEGVIVPKAQPKSQPAFLGFTQTAEIWNSR) the chain is on the stromal side. Residues 75-95 (ACMIGLIGTFIVELILNKGIL) form a helical membrane-spanning segment. The Lumenal segment spans residues 96–110 (ELIGVEIGKGLDLPL).

It belongs to the ELIP/psbS family. In terms of assembly, may bind chlorophyll and form dimers in the thylakoid membrane. Component of a high molecular weight complex containing OHP1, OHP2 and HCF244, and PSII core proteins D1/D2, HCF136 and HCF173. Interacts with HCF244. Forms a trimeric complex with OHP2 and HCF244 that mutually stabilizes each subunit. Mostly expressed in cotyledons and shoot apices.

The protein resides in the plastid. It is found in the chloroplast thylakoid membrane. Functionally, may play a photoprotective role in the thylakoid membrane in response to light stress. Involved in photosystems I (PSI) and II (PSII) core proteins function. Forms a trimeric complex with OHP2 and HCF244 that is required to promote PSII core subunit assembly. The trimeric complex forms a transient PSII reaction center-like complex with PsbA, PsbD, PsbE, PsbF and PsbI subunits in thylakoids for early assembly of PSII as well as PSII repair. The trimeric complex is required for the recruitment of ribosomes to the psbA mRNA during PSII biogenesis and repair. Forms a heterodimer with OHP1 that binds chlorophylls and carotenoids, and that may function in the delivery of pigments to the PsbA subunit of PSII. The polypeptide is Light-harvesting complex-like protein OHP1, chloroplastic (Arabidopsis thaliana (Mouse-ear cress)).